Consider the following 182-residue polypeptide: Methionine-R-sulfoxide reductase B2, mitochondrial (182 aa).

Residues 1-20 (MARLLWLLRGLTLGTAPRRA) constitute a mitochondrion transit peptide. Residues 51-180 (KSEWQKKLTP…NSVALKFKPR (130 aa)) enclose the MsrB domain. Zn(2+)-binding residues include cysteine 90, cysteine 93, cysteine 146, and cysteine 149. The active-site Nucleophile is cysteine 169.

This sequence belongs to the MsrB Met sulfoxide reductase family. In terms of assembly, interacts with DAOA; the interaction is direct. Zn(2+) serves as cofactor. Ubiquitous. Detected in retina, ocular ciliary body, skeletal muscle, heart, colon, bone marrow, cerebellum, small intestine, fetal brain, fetal liver, kidney, spinal cord, lung, placenta and prostate.

Its subcellular location is the mitochondrion. It catalyses the reaction L-methionyl-[protein] + [thioredoxin]-disulfide + H2O = L-methionyl-(R)-S-oxide-[protein] + [thioredoxin]-dithiol. The catalysed reaction is [thioredoxin]-disulfide + L-methionine + H2O = L-methionine (R)-S-oxide + [thioredoxin]-dithiol. In terms of biological role, methionine-sulfoxide reductase that specifically reduces methionine (R)-sulfoxide back to methionine. While in many cases, methionine oxidation is the result of random oxidation following oxidative stress, methionine oxidation is also a post-translational modification that takes place on specific residue. Upon oxidative stress, may play a role in the preservation of mitochondrial integrity by decreasing the intracellular reactive oxygen species build-up through its scavenging role, hence contributing to cell survival and protein maintenance. The polypeptide is Methionine-R-sulfoxide reductase B2, mitochondrial (MSRB2) (Homo sapiens (Human)).